A 143-amino-acid chain; its full sequence is Large ribosomal subunit protein uL11 (143 aa).

It belongs to the universal ribosomal protein uL11 family. In terms of assembly, part of the ribosomal stalk of the 50S ribosomal subunit. Interacts with L10 and the large rRNA to form the base of the stalk. L10 forms an elongated spine to which L12 dimers bind in a sequential fashion forming a multimeric L10(L12)X complex. Post-translationally, one or more lysine residues are methylated.

Forms part of the ribosomal stalk which helps the ribosome interact with GTP-bound translation factors. This chain is Large ribosomal subunit protein uL11, found in Kocuria rhizophila (strain ATCC 9341 / DSM 348 / NBRC 103217 / DC2201).